The primary structure comprises 488 residues: 3-octaprenyl-4-hydroxybenzoate carboxy-lyase (488 aa).

N172 is a binding site for Mn(2+). Residues 175 to 177, 189 to 191, and 194 to 195 contribute to the prenylated FMN site; these read IYR, RWL, and RG. Mn(2+) is bound at residue E238. The active-site Proton donor is the D287.

This sequence belongs to the UbiD family. In terms of assembly, homohexamer. Prenylated FMN is required as a cofactor. Requires Mn(2+) as cofactor.

The protein localises to the cell membrane. It catalyses the reaction a 4-hydroxy-3-(all-trans-polyprenyl)benzoate + H(+) = a 2-(all-trans-polyprenyl)phenol + CO2. The protein operates within cofactor biosynthesis; ubiquinone biosynthesis. Functionally, catalyzes the decarboxylation of 3-octaprenyl-4-hydroxy benzoate to 2-octaprenylphenol, an intermediate step in ubiquinone biosynthesis. The protein is 3-octaprenyl-4-hydroxybenzoate carboxy-lyase of Pseudomonas putida (strain W619).